Consider the following 1826-residue polypeptide: ATPase family AAA domain-containing protein 5 (1826 aa).

A Phosphoserine modification is found at S44. A Glycyl lysine isopeptide (Lys-Gly) (interchain with G-Cter in SUMO2) cross-link involves residue K127. 7 disordered regions span residues 170-254 (SIED…KRAD), 282-311 (PAVP…CEPS), 323-367 (AQVH…RKSN), 398-572 (QQFM…EPGS), 588-623 (RSCS…ARTS), 647-684 (KFTR…TSKN), and 709-729 (VVPL…KSPE). The residue at position 215 (S215) is a Phosphoserine. The segment covering 243–254 (NDSRTHATKRAD) has biased composition (basic and acidic residues). The segment covering 298–311 (SGSEGELSGSCEPS) has biased composition (low complexity). Phosphoserine is present on residues S351 and S366. The segment at 365 to 381 (KSNVVIQEGQLELAVLE) is interaction with WDR48. The span at 418 to 442 (KPLEKQKDPSEKSVHEGDSSSEKII) shows a compositional bias: basic and acidic residues. The span at 445 to 456 (PNIQRVSSQGCL) shows a compositional bias: polar residues. A compositionally biased stretch (basic and acidic residues) spans 459-468 (HADRGSFPKE). Residues 469 to 481 (KSKKPNKKGKKTR) are compositionally biased toward basic residues. The span at 487–505 (NREENIQKEKTAFSLKDEQ) shows a compositional bias: basic and acidic residues. Residues 540-559 (DSVQMSLCNRNKSRSSSTPT) show a composition bias toward polar residues. A phosphoserine mark is found at S591 and S603. A phosphoserine mark is found at S727 and S801. The interval 965 to 1034 (GKQASPQLQP…NLDPSRDSGT (70 aa)) is disordered. The segment covering 1006–1019 (EEMKGRSKDLDERI) has biased composition (basic and acidic residues). S1104 carries the phosphoserine modification. 1119-1126 (GPTGVGKT) is a binding site for ATP. The disordered stretch occupies residues 1183-1216 (YNIGKSPKKLNSPGKVVTSPRKLPPSSPKTSGQK). Residues 1415 to 1419 (LVCSE) carry the LXCXE motif motif. Disordered regions lie at residues 1527–1552 (PASM…RKQK) and 1592–1611 (SNPE…VPQP). An interaction with RAD51 and RFC5 region spans residues 1612 to 1701 (PKTLAEKKCC…ATAEALSFTE (90 aa)).

It belongs to the AAA ATPase family. Component of a heteropentameric replication factor ATAD5 RFC-like complex composed of one large subunit (ATAD5) and four small subunits (RFC2, RFC3, RFC4 and RFC5). Within the ATAD5 RFC-like complex, interacts with RFC2, RFC4 and RFC5. Within the ATAD5 RFC-like complex, interacts directly via-N terminal with RAD51; the interactions is enhanced under replication stress. Interacts with RB1 predominantly in G1 phase via its LXCXE motif. Interacts with RAD9A in growing cells. The interaction with RAD9A is reduced after exposure to DNA replication-inhibiting agents. Interacts with BRD4. Interacts with PCNA. Interacts with deubiquitinating enzyme USP1, and its associated factor, WDR48. In terms of processing, ATR may stimulate the RAD9A dissociation. In terms of tissue distribution, expressed ubiquitously in all cell lines like teratocarcinoma, cell lymphoma, lymphoma.

The protein resides in the nucleus. In terms of biological role, has an important role in DNA replication and in maintaining genome integrity during replication stress. Involved in a RAD9A-related damage checkpoint, a pathway that is important in determining whether DNA damage is compatible with cell survival or whether it requires cell elimination by apoptosis. Modulates the RAD9A interaction with BCL2 and thereby induces DNA damage-induced apoptosis. Promotes PCNA deubiquitination by recruiting the ubiquitin-specific protease 1 (USP1) and WDR48 thereby down-regulating the error-prone damage bypass pathway. As component of the ATAD5 RFC-like complex, regulates the function of the DNA polymerase processivity factor PCNA by unloading the ring-shaped PCNA homotrimer from DNA after replication during the S phase of the cell cycle. This seems to be dependent on its ATPase activity. Plays important roles in restarting stalled replication forks under replication stress, by unloading the PCNA homotrimer from DNA and recruiting RAD51 possibly through an ATR-dependent manner. Ultimately this enables replication fork regression, breakage, and eventual fork restart. Both the PCNA unloading activity and the interaction with WDR48 are required to efficiently recruit RAD51 to stalled replication forks. Promotes the generation of MUS81-mediated single-stranded DNA-associated breaks in response to replication stress, which is an alternative pathway to restart stalled/regressed replication forks. This Mus musculus (Mouse) protein is ATPase family AAA domain-containing protein 5 (Atad5).